We begin with the raw amino-acid sequence, 448 residues long: tRNA modification GTPase MnmE (448 aa).

(6S)-5-formyl-5,6,7,8-tetrahydrofolate is bound by residues arginine 22, glutamate 83, and arginine 122. One can recognise a TrmE-type G domain in the interval 219–369 (GVKTVIVGRP…LESEILKTLK (151 aa)). Asparagine 229 is a binding site for K(+). Residues 229 to 234 (NVGKSS), 248 to 254 (SDIAGTT), and 273 to 276 (DTAG) each bind GTP. Serine 233 contributes to the Mg(2+) binding site. Residues serine 248, isoleucine 250, and threonine 253 each contribute to the K(+) site. A Mg(2+)-binding site is contributed by threonine 254. Position 448 (lysine 448) interacts with (6S)-5-formyl-5,6,7,8-tetrahydrofolate.

This sequence belongs to the TRAFAC class TrmE-Era-EngA-EngB-Septin-like GTPase superfamily. TrmE GTPase family. As to quaternary structure, homodimer. Heterotetramer of two MnmE and two MnmG subunits. K(+) is required as a cofactor.

It is found in the cytoplasm. In terms of biological role, exhibits a very high intrinsic GTPase hydrolysis rate. Involved in the addition of a carboxymethylaminomethyl (cmnm) group at the wobble position (U34) of certain tRNAs, forming tRNA-cmnm(5)s(2)U34. The chain is tRNA modification GTPase MnmE from Acholeplasma laidlawii (strain PG-8A).